A 50-amino-acid chain; its full sequence is Protein PndA (50 aa).

Residues 5–25 form a helical membrane-spanning segment; it reads TFLMMLIVVCVTILCFVWMVR.

It belongs to the Hok/Gef family.

It localises to the cell inner membrane. In terms of biological role, when overexpressed kill the cells from the inside by interfering with a vital function in the cell membrane. Its function is as follows. Toxic component of a type I toxin-antitoxin (TA) system. When expressed is involved in cellular Mg(2+) release and degradation of stable RNA. The protein is Protein PndA (pndA) of Escherichia coli.